The following is a 913-amino-acid chain: Eukaryotic translation initiation factor 3 subunit C (913 aa).

The segment at 1–44 is disordered; the sequence is MSRFFTTGSDSESESSLSGEELVTKPVGGNYGKQPLLLSEDEED. Residues 8 to 21 are compositionally biased toward low complexity; that stretch reads GSDSESESSLSGEE. Phosphoserine is present on residues serine 9, serine 11, serine 13, serine 15, serine 16, serine 18, and serine 39. At lysine 99 the chain carries N6-acetyllysine. Disordered regions lie at residues 157 to 301 and 522 to 542; these read TSYK…GGEW and QLTP…NEGE. Phosphoserine is present on residues serine 166, serine 178, serine 181, and serine 182. A compositionally biased stretch (acidic residues) spans 166–190; sequence SADEDAEKNEEDSEGSSDEDEDEDG. Residues 199 to 216 are compositionally biased toward basic and acidic residues; sequence KKSEAPSGESRKFLKKMD. Over residues 217 to 232 the composition is skewed to acidic residues; the sequence is DEDEDSEDSEDDEDWD. The segment covering 261–278 has biased composition (basic and acidic residues); that stretch reads PTTDEDKKAAEKKREDKA. A compositionally biased stretch (polar residues) spans 522–531; that stretch reads QLTPPEGSSK. Threonine 524 is modified (phosphothreonine). Lysine 643 carries the N6-acetyllysine modification. The PCI domain occupies 673–849; the sequence is FHLHINLELL…QTVVMHRTEP (177 aa). The disordered stretch occupies residues 885–913; it reads FRDQKDGYRKNEGYMRRGGYRQQQSQTAY. A compositionally biased stretch (basic and acidic residues) spans 886-899; it reads RDQKDGYRKNEGYM. Position 909 is a phosphoserine (serine 909).

This sequence belongs to the eIF-3 subunit C family. Component of the eukaryotic translation initiation factor 3 (eIF-3) complex, which is composed of 13 subunits: EIF3A, EIF3B, EIF3C, EIF3D, EIF3E, EIF3F, EIF3G, EIF3H, EIF3I, EIF3J, EIF3K, EIF3L and EIF3M. The eIF-3 complex appears to include 3 stable modules: module A is composed of EIF3A, EIF3B, EIF3G and EIF3I; module B is composed of EIF3F, EIF3H, and EIF3M; and module C is composed of EIF3C, EIF3D, EIF3E, EIF3K and EIF3L. EIF3C of module C binds EIF3B of module A and EIF3H of module B, thereby linking the three modules. EIF3J is a labile subunit that binds to the eIF-3 complex via EIF3B. The eIF-3 complex interacts with RPS6KB1 under conditions of nutrient depletion. Mitogenic stimulation leads to binding and activation of a complex composed of MTOR and RPTOR, leading to phosphorylation and release of RPS6KB1 and binding of EIF4B to eIF-3. Interacts with ALKBH4, IFIT1 and IFIT2. Interacts with BZW2/5MP1. Phosphorylated. Phosphorylation is enhanced upon serum stimulation.

The protein localises to the cytoplasm. In terms of biological role, component of the eukaryotic translation initiation factor 3 (eIF-3) complex, which is required for several steps in the initiation of protein synthesis. The eIF-3 complex associates with the 40S ribosome and facilitates the recruitment of eIF-1, eIF-1A, eIF-2:GTP:methionyl-tRNAi and eIF-5 to form the 43S pre-initiation complex (43S PIC). The eIF-3 complex stimulates mRNA recruitment to the 43S PIC and scanning of the mRNA for AUG recognition. The eIF-3 complex is also required for disassembly and recycling of post-termination ribosomal complexes and subsequently prevents premature joining of the 40S and 60S ribosomal subunits prior to initiation. The eIF-3 complex specifically targets and initiates translation of a subset of mRNAs involved in cell proliferation, including cell cycling, differentiation and apoptosis, and uses different modes of RNA stem-loop binding to exert either translational activation or repression. The chain is Eukaryotic translation initiation factor 3 subunit C from Pongo abelii (Sumatran orangutan).